Here is a 349-residue protein sequence, read N- to C-terminus: MSTVSAYAATSATEPLTKTTITRRAVGPHDVAFDIHFAGICHSDIHTVKAEWGVPNYPVVPGHEIAGVVTEVGSEVTKYKVGDRVGVGCFVDSCRECDNCKAGLEQYCTGTGMVGTYNAIDRDGTPTHGGYSGAIVVDENYVLRIPDSLPLDAAAPLLCAGITTYSPLRHWNAGPGKKVAVIGLGGLGHVAVKLAKAMGADVTVLSQSLKKMEDGLRLGASAYYATSDPETFDKLAGSFDLILNTVSANLDLGAYLGLLKLDGALVELGLPEHPMEVPAFPLLAQRRNLTGSMIGGIPETQEMLDFCAEHDVRPEIEIITPDYINEAYERVLASDVRYRFVIDTASLRS.

The Zn(2+) site is built by C41, H63, C94, C97, C100, C108, and C159. K210 is covalently cross-linked (Isoglutamyl lysine isopeptide (Lys-Gln) (interchain with Q-Cter in protein Pup)).

The protein belongs to the zinc-containing alcohol dehydrogenase family. Zn(2+) is required as a cofactor.

The enzyme catalyses a primary alcohol + NADP(+) = an aldehyde + NADPH + H(+). Prefers aldehydes over alcohols. The chain is NADP-dependent alcohol dehydrogenase C 1 (adhc1) from Mycolicibacterium smegmatis (strain ATCC 700084 / mc(2)155) (Mycobacterium smegmatis).